The chain runs to 453 residues: Potassium/proton antiporter CemA (453 aa).

A run of 4 helical transmembrane segments spans residues 235 to 255 (YMAC…IIFL), 328 to 348 (ICTI…ACLL), 378 to 398 (ILLL…EIII), and 414 to 434 (VSCF…YWIF).

It belongs to the CemA family.

It localises to the plastid. The protein localises to the chloroplast inner membrane. The catalysed reaction is K(+)(in) + H(+)(out) = K(+)(out) + H(+)(in). Contributes to K(+)/H(+) antiport activity by supporting proton efflux to control proton extrusion and homeostasis in chloroplasts in a light-dependent manner to modulate photosynthesis. Prevents excessive induction of non-photochemical quenching (NPQ) under continuous-light conditions. Indirectly promotes efficient inorganic carbon uptake into chloroplasts. This is Potassium/proton antiporter CemA from Zygnema circumcarinatum (Green alga).